The sequence spans 898 residues: Conserved oligomeric Golgi complex subunit 5 (898 aa).

A disordered region spans residues 1-30; the sequence is MNNNNNNNEGVSSSSSSSSSPLPNISSPNL. The stretch at 129–192 forms a coiled coil; that stretch reads DTLKLGVSNL…VKKLKNHLQA (64 aa). Disordered regions lie at residues 311–339, 519–551, and 679–705; these read NNNNSNNNITTNNNNNNYNNNNNNNNNNN, SNNSNSNSNNSIESSLSTSSSSSSSSSSSSSTT, and STGGVNNNSNSNNNNEIITINENSKPT. The segment covering 679 to 702 has biased composition (low complexity); it reads STGGVNNNSNSNNNNEIITINENS.

Its subcellular location is the golgi apparatus membrane. The sequence is that of Conserved oligomeric Golgi complex subunit 5 (cog5) from Dictyostelium discoideum (Social amoeba).